Reading from the N-terminus, the 323-residue chain is Mas-related G-protein coupled receptor member B4 (323 aa).

Residues 1-34 (MSPTTQAWSINNTVVKENYYTEILSCITTFNTLN) lie on the Extracellular side of the membrane. N-linked (GlcNAc...) asparagine glycosylation occurs at N11. The helical transmembrane segment at 35 to 55 (FLIVIISVVGMAGNATVLWLL) threads the bilayer. The Cytoplasmic segment spans residues 56 to 63 (GFHMHRNA). The helical transmembrane segment at 64–84 (FSVYVLNLAGADFLYLCAQTV) threads the bilayer. The Extracellular portion of the chain corresponds to 85 to 98 (YSLECVLQFDNSYF). A helical membrane pass occupies residues 99–119 (YFLLTILMFNYLAGFCMIAAI). At 120 to 147 (STERCLSVTWPIWYHCQRPRHTSATVCA) the chain is on the cytoplasmic side. The chain crosses the membrane as a helical span at residues 148–168 (LFWAFSLLLSLLLGQGCGFLF). The Extracellular segment spans residues 169–180 (SKFDYSFCRYCN). A helical membrane pass occupies residues 181-201 (FIATAFLIVIFMVLFVSSLAL). The Cytoplasmic segment spans residues 202-224 (LAKIICGSHRIPVTRFYVTIALT). Residues 225–245 (VLVFIFFGLPIGICVFLLPWI) form a helical membrane-spanning segment. Topologically, residues 246-255 (HMMLSSFFYE) are extracellular. A helical membrane pass occupies residues 256 to 276 (MVTLLSCVNSCANPIIYFFVG). At 277-323 (SIRHHRLQRQTLKLLLQRAMQDTPEEEGGERGPSQKSEDLEVVRCSS) the chain is on the cytoplasmic side. Residues 298–323 (DTPEEEGGERGPSQKSEDLEVVRCSS) form a disordered region. The span at 312–323 (KSEDLEVVRCSS) shows a compositional bias: basic and acidic residues.

Belongs to the G-protein coupled receptor 1 family. Mas subfamily. Expressed strongly in newborn dorsal root ganglia, adult dorsal root ganglia and trigeminal ganlia.

Its subcellular location is the membrane. Orphan receptor. Probably involved in the function of nociceptive neurons. May regulate nociceptor function and/or development, including the sensation or modulation of pain. This chain is Mas-related G-protein coupled receptor member B4 (Mrgprb4), found in Rattus norvegicus (Rat).